Reading from the N-terminus, the 387-residue chain is Zinc homeostasis factor 1 (387 aa).

The next 4 membrane-spanning stretches (helical) occupy residues 10–30, 34–54, 77–97, and 113–133; these read IILL…TGYA, LALI…LVAL, EILG…FIFM, and TLMF…IFLF. Positions 195 to 214 are enriched in polar residues; sequence SYTGNHNGAGTSKPVNNHGS. Residues 195–221 are disordered; the sequence is SYTGNHNGAGTSKPVNNHGSIEQDAPK. Helical transmembrane passes span 234 to 254 and 263 to 283; these read FLHV…ALFI and FLFD…SAIP.

Belongs to the cation diffusion facilitator (CDF) transporter (TC 2.A.4) family. SLC30A subfamily.

The protein resides in the endoplasmic reticulum membrane. It localises to the nucleus membrane. Its function is as follows. Involved in zinc homeostasis, where it plays a role in its accumulation in the endoplasmic reticulum/nucleus. Also has a role in the sequestration of cadmium into the endoplasmic reticulum. The polypeptide is Zinc homeostasis factor 1 (zhf1) (Schizosaccharomyces pombe (strain 972 / ATCC 24843) (Fission yeast)).